Here is a 298-residue protein sequence, read N- to C-terminus: Ethanolamine ammonia-lyase small subunit (298 aa).

The adenosylcob(III)alamin site is built by Val210, Glu231, and Cys261.

This sequence belongs to the EutC family. The basic unit is a heterodimer which dimerizes to form tetramers. The heterotetramers trimerize; 6 large subunits form a core ring with 6 small subunits projecting outwards. The cofactor is adenosylcob(III)alamin.

The protein resides in the bacterial microcompartment. It catalyses the reaction ethanolamine = acetaldehyde + NH4(+). It participates in amine and polyamine degradation; ethanolamine degradation. Catalyzes the deamination of various vicinal amino-alcohols to oxo compounds. Allows this organism to utilize ethanolamine as the sole source of nitrogen and carbon in the presence of external vitamin B12. The polypeptide is Ethanolamine ammonia-lyase small subunit (Salmonella agona (strain SL483)).